The sequence spans 503 residues: 3-octaprenyl-4-hydroxybenzoate carboxy-lyase (503 aa).

Position 176 (N176) interacts with Mn(2+). Prenylated FMN is bound by residues 179–181, 193–195, and 198–199; these read IYR, RWL, and RG. E242 provides a ligand contact to Mn(2+). D303 (proton donor) is an active-site residue.

It belongs to the UbiD family. Homohexamer. Prenylated FMN is required as a cofactor. It depends on Mn(2+) as a cofactor.

The protein localises to the cell membrane. It catalyses the reaction a 4-hydroxy-3-(all-trans-polyprenyl)benzoate + H(+) = a 2-(all-trans-polyprenyl)phenol + CO2. It functions in the pathway cofactor biosynthesis; ubiquinone biosynthesis. Its function is as follows. Catalyzes the decarboxylation of 3-octaprenyl-4-hydroxy benzoate to 2-octaprenylphenol, an intermediate step in ubiquinone biosynthesis. The sequence is that of 3-octaprenyl-4-hydroxybenzoate carboxy-lyase from Ralstonia pickettii (strain 12J).